The following is a 342-amino-acid chain: Dihydroorotate dehydrogenase (quinone) (342 aa).

Residues 65–69 (AGLDK) and T89 contribute to the FMN site. Residue K69 participates in substrate binding. 114–118 (NRMGF) contacts substrate. FMN is bound by residues N142 and N175. Substrate is bound at residue N175. S178 acts as the Nucleophile in catalysis. A substrate-binding site is contributed by N180. Positions 220 and 248 each coordinate FMN. 249–250 (NT) serves as a coordination point for substrate. FMN is bound by residues G271, G300, and 321–322 (YT).

It belongs to the dihydroorotate dehydrogenase family. Type 2 subfamily. As to quaternary structure, monomer. The cofactor is FMN.

The protein resides in the cell membrane. It catalyses the reaction (S)-dihydroorotate + a quinone = orotate + a quinol. It participates in pyrimidine metabolism; UMP biosynthesis via de novo pathway; orotate from (S)-dihydroorotate (quinone route): step 1/1. Catalyzes the conversion of dihydroorotate to orotate with quinone as electron acceptor. This Burkholderia pseudomallei (strain 668) protein is Dihydroorotate dehydrogenase (quinone).